The primary structure comprises 179 residues: Large ribosomal subunit protein uL5 (179 aa).

It belongs to the universal ribosomal protein uL5 family. In terms of assembly, part of the 50S ribosomal subunit; part of the 5S rRNA/L5/L18/L25 subcomplex. Contacts the 5S rRNA and the P site tRNA. Forms a bridge to the 30S subunit in the 70S ribosome.

In terms of biological role, this is one of the proteins that bind and probably mediate the attachment of the 5S RNA into the large ribosomal subunit, where it forms part of the central protuberance. In the 70S ribosome it contacts protein S13 of the 30S subunit (bridge B1b), connecting the 2 subunits; this bridge is implicated in subunit movement. Contacts the P site tRNA; the 5S rRNA and some of its associated proteins might help stabilize positioning of ribosome-bound tRNAs. The chain is Large ribosomal subunit protein uL5 from Thioalkalivibrio sulfidiphilus (strain HL-EbGR7).